We begin with the raw amino-acid sequence, 772 residues long: Probable serine/threonine-protein kinase HAL5-like (772 aa).

4 disordered regions span residues 1 to 102 (MASS…TRHV), 115 to 165 (RAGT…EPNN), 185 to 241 (IDTQ…RSNT), and 344 to 396 (NADE…SANV). Positions 9–19 (SEPRISRESSL) are enriched in basic and acidic residues. Low complexity-rich tracts occupy residues 20–33 (KRSL…KGLF) and 41–59 (NTGP…ISTP). A compositionally biased stretch (basic and acidic residues) spans 66 to 86 (TKDKQDRLKNLAANKEKELQT). A compositionally biased stretch (low complexity) spans 146 to 158 (RQSSSNRSSSFSN). Basic residues predominate over residues 202–212 (RRSRSTQRKRL). A Protein kinase domain is found at 454-758 (GKSIGIIGQG…VDSLLKSSWM (305 aa)). ATP contacts are provided by residues 460-468 (IGQGAYGVV) and Lys-498. The Proton acceptor role is filled by Asp-609.

The protein belongs to the protein kinase superfamily. CAMK Ser/Thr protein kinase family. NPR/HAL subfamily. HAL5 sub-subfamily.

The enzyme catalyses L-seryl-[protein] + ATP = O-phospho-L-seryl-[protein] + ADP + H(+). It catalyses the reaction L-threonyl-[protein] + ATP = O-phospho-L-threonyl-[protein] + ADP + H(+). This chain is Probable serine/threonine-protein kinase HAL5-like, found in Kluyveromyces lactis (strain ATCC 8585 / CBS 2359 / DSM 70799 / NBRC 1267 / NRRL Y-1140 / WM37) (Yeast).